The sequence spans 217 residues: Flagellin B1 (217 aa).

A propeptide spanning residues 1-12 (MKVFEFLKGKRG) is cleaved from the precursor.

The protein belongs to the archaeal flagellin family.

It is found in the archaeal flagellum. Its function is as follows. Flagellin is the subunit protein which polymerizes to form the filaments of archaeal flagella. The polypeptide is Flagellin B1 (flaB1) (Methanocaldococcus jannaschii (strain ATCC 43067 / DSM 2661 / JAL-1 / JCM 10045 / NBRC 100440) (Methanococcus jannaschii)).